Here is a 218-residue protein sequence, read N- to C-terminus: Small ribosomal subunit protein mS34 (218 aa).

The segment at 178-218 (RQKNGDPSTEEPMLSLERIRTDPWDYPENQEAKKKTKGTAV) is disordered.

It belongs to the mitochondrion-specific ribosomal protein mS34 family. Component of the mitochondrial ribosome small subunit (28S) which comprises a 12S rRNA and about 30 distinct proteins.

Its subcellular location is the mitochondrion. In terms of biological role, required for mitochondrial translation, plays a role in maintaining the stability of the small ribosomal subunit and the 12S rRNA that are required for mitoribosome formation. This Bos taurus (Bovine) protein is Small ribosomal subunit protein mS34.